The chain runs to 688 residues: UvrABC system protein C (688 aa).

Over residues 1-14 (MSPLDQKNKPRGGA) the composition is skewed to basic and acidic residues. The interval 1–20 (MSPLDQKNKPRGGADDLPPE) is disordered. Positions 71–149 (NAPGVYRMMN…IKRLRPRFNV (79 aa)) constitute a GIY-YIG domain. One can recognise a UVR domain in the interval 259–294 (QKVKTEISAAMQQASEDLDFERAAIYRDRLAALSHV).

The protein belongs to the UvrC family. In terms of assembly, interacts with UvrB in an incision complex.

The protein resides in the cytoplasm. Its function is as follows. The UvrABC repair system catalyzes the recognition and processing of DNA lesions. UvrC both incises the 5' and 3' sides of the lesion. The N-terminal half is responsible for the 3' incision and the C-terminal half is responsible for the 5' incision. This Mesorhizobium japonicum (strain LMG 29417 / CECT 9101 / MAFF 303099) (Mesorhizobium loti (strain MAFF 303099)) protein is UvrABC system protein C.